The primary structure comprises 733 residues: Protein psiM (733 aa).

The signal sequence occupies residues 1-26 (MKKINNNKIFVLFLTILLYLLNITTA). Residues asparagine 22, asparagine 65, and asparagine 96 are each glycosylated (N-linked (GlcNAc...) asparagine). The Extracellular segment spans residues 27–672 (QKPVSINIKI…VCQKAALVST (646 aa)). The PA14 domain occupies 114 to 260 (NYDSDSGNYI…YDYCGVCNGD (147 aa)). Residues asparagine 277, asparagine 336, asparagine 379, asparagine 428, asparagine 471, asparagine 537, asparagine 573, and asparagine 641 are each glycosylated (N-linked (GlcNAc...) asparagine). The helical transmembrane segment at 673 to 693 (AVIASVVVVGAVVLGAAIFAG) threads the bilayer. The Cytoplasmic portion of the chain corresponds to 694–733 (KKGYDAWKTSQGNVMAASQANPLYTQSSNGGENPLYNSPT).

Belongs to the prespore-cell-inducing factor family.

Its subcellular location is the membrane. The sequence is that of Protein psiM (psiM) from Dictyostelium discoideum (Social amoeba).